A 115-amino-acid chain; its full sequence is Mediator of RNA polymerase II transcription subunit 11 (115 aa).

Belongs to the Mediator complex subunit 11 family. As to quaternary structure, component of the Mediator complex.

It is found in the nucleus. Its function is as follows. Component of the Mediator complex, a coactivator involved in the regulated transcription of nearly all RNA polymerase II-dependent genes. Mediator functions as a bridge to convey information from gene-specific regulatory proteins to the basal RNA polymerase II transcription machinery. The Mediator complex, having a compact conformation in its free form, is recruited to promoters by direct interactions with regulatory proteins and serves for the assembly of a functional pre-initiation complex with RNA polymerase II and the general transcription factors. The polypeptide is Mediator of RNA polymerase II transcription subunit 11 (MED11) (Arabidopsis thaliana (Mouse-ear cress)).